Consider the following 427-residue polypeptide: Acetyl-CoA acetyltransferase, mitochondrial (427 aa).

A mitochondrion-targeting transit peptide spans 1–33; the sequence is MAVLAALLRSGARSRSPLLRRLVQEIRYVERSY. At lysine 66 the chain carries N6-acetyllysine; alternate. Lysine 66 bears the N6-succinyllysine; alternate mark. Lysine 78 is modified (N6-succinyllysine). Cysteine 126 functions as the Acyl-thioester intermediate in the catalytic mechanism. 4 positions are modified to N6-acetyllysine; alternate: lysine 174, lysine 181, lysine 190, and lysine 202. N6-succinyllysine; alternate occurs at positions 174, 181, 190, and 202. A CoA-binding site is contributed by tyrosine 219. Tyrosine 219 contributes to the K(+) binding site. 2 positions are modified to N6-acetyllysine; alternate: lysine 223 and lysine 230. N6-succinyllysine; alternate is present on residues lysine 223 and lysine 230. At lysine 243 the chain carries N6-succinyllysine. N6-acetyllysine occurs at positions 251 and 257. CoA-binding positions include 258–260 and lysine 263; that span reads RVD. Residue lysine 263 is modified to N6-acetyllysine; alternate. An N6-succinyllysine; alternate modification is found at lysine 263. N6-succinyllysine occurs at positions 266 and 268. Lysine 273 is subject to N6-acetyllysine. Positions 280, 281, and 283 each coordinate K(+). Serine 284 provides a ligand contact to CoA. Lysine 338 carries the N6-acetyllysine modification. Valine 381 is a K(+) binding site. Cysteine 413 serves as the catalytic Proton donor/acceptor.

It belongs to the thiolase-like superfamily. Thiolase family. Homotetramer. In terms of processing, succinylation at Lys-268, adjacent to a coenzyme A binding site. Desuccinylated by SIRT5.

It is found in the mitochondrion. It carries out the reaction 2 acetyl-CoA = acetoacetyl-CoA + CoA. The enzyme catalyses propanoyl-CoA + acetyl-CoA = 2-methyl-3-oxobutanoyl-CoA + CoA. Its pathway is lipid metabolism; fatty acid beta-oxidation. Its activity is regulated as follows. Activated by potassium ions, but not sodium ions. This is one of the enzymes that catalyzes the last step of the mitochondrial beta-oxidation pathway, an aerobic process breaking down fatty acids into acetyl-CoA. Using free coenzyme A/CoA, catalyzes the thiolytic cleavage of medium- to long-chain 3-oxoacyl-CoAs into acetyl-CoA and a fatty acyl-CoA shortened by two carbon atoms. The activity of the enzyme is reversible and it can also catalyze the condensation of two acetyl-CoA molecules into acetoacetyl-CoA. Thereby, it plays a major role in ketone body metabolism. This Homo sapiens (Human) protein is Acetyl-CoA acetyltransferase, mitochondrial (ACAT1).